The chain runs to 336 residues: Serpentine receptor class alpha-10 (336 aa).

Over 1-28 (MGPITANSSKCATEDQMILQTSLLLRIN) the chain is Extracellular. A helical membrane pass occupies residues 29–49 (VIIMTIVAIITFILTYKALFI). Topologically, residues 50-61 (LKIRPIFHSSTK) are cytoplasmic. Residues 62–82 (ILLYTSLLFVNVHAVIFMVIQ) form a helical membrane-spanning segment. At 83–107 (NTALIRSFTLSDKPCEIMRTTLECR) the chain is on the extracellular side. Residues 108-128 (FQNHVLIFGIAGVNFNQFGLT) traverse the membrane as a helical segment. The Cytoplasmic segment spans residues 129-148 (VDRLLATIIPQSYSHMGALP). The chain crosses the membrane as a helical span at residues 149–169 (GVILSVLVVACSIAAPLIIAI). The Extracellular portion of the chain corresponds to 170 to 192 (GDPYDDIVPNCFFFPEHSAPRAN). Residues 193 to 213 (IFLVTLSTLVITSIFLNFIII) traverse the membrane as a helical segment. At 214–243 (YANKKLEKGCRTRFYVTQRYQKREALISTR) the chain is on the cytoplasmic side. Residues 244-264 (IISYIAASQFLGLTLYSTMVL) traverse the membrane as a helical segment. The Extracellular segment spans residues 265-280 (TLRLHKSMIPISIYHN). Residues 281–301 (MVWWAYTVPFAAVSLPALLIY) traverse the membrane as a helical segment. Over 302 to 336 (RINQVGSNRKRVINRITAKVETQEEHMKSLKELWA) the chain is Cytoplasmic.

The protein belongs to the nematode receptor-like protein sra family. In terms of tissue distribution, expressed in the URX sensory neuron, the ALA interneuron and in additional interneurons, pharyngeal neurons and muscle.

The protein localises to the membrane. The chain is Serpentine receptor class alpha-10 (sra-10) from Caenorhabditis elegans.